Reading from the N-terminus, the 484-residue chain is Solute carrier family 40 member 1 (484 aa).

Transmembrane regions (helical) follow at residues 58–78 (LLTA…GPIV), 94–114 (WLLL…ALLV), 123–143 (GFPA…LAAL), 189–209 (VLSG…ALAA), 212–232 (LAAV…FPAL), 279–299 (VVLP…FGTL), 308–328 (GIPA…GIAA), 346–366 (LWSI…VWAG), 377–397 (LMGG…AVMQ), 413–433 (GVQN…GIIV), and 442–462 (LIVL…MHVY).

This sequence belongs to the ferroportin (FP) (TC 2.A.100) family. SLC40A subfamily.

The protein localises to the membrane. Functionally, may be involved in iron transport and iron homeostasis. In Oryza sativa subsp. japonica (Rice), this protein is Solute carrier family 40 member 1.